The chain runs to 439 residues: Xylose isomerase (439 aa).

Residues histidine 101 and aspartate 104 contribute to the active site. 7 residues coordinate Mg(2+): glutamate 232, glutamate 268, histidine 271, aspartate 296, aspartate 307, aspartate 309, and aspartate 339.

Belongs to the xylose isomerase family. In terms of assembly, homotetramer. Requires Mg(2+) as cofactor.

It is found in the cytoplasm. The enzyme catalyses alpha-D-xylose = alpha-D-xylulofuranose. In Haemophilus influenzae (strain PittGG), this protein is Xylose isomerase.